A 188-amino-acid chain; its full sequence is Kappa-casein (188 aa).

The first 21 residues, 1–21, serve as a signal peptide directing secretion; sequence MMKSSFLIVPILALTLPFLGA. Thr143 and Thr148 each carry an O-linked (GalNAc...) threonine glycan. Thr163 is modified (phosphothreonine). Position 167 is a phosphoserine; alternate (Ser167). Residue Ser167 is glycosylated (O-linked (GalNAc...) serine; alternate). Residue Thr184 is glycosylated (O-linked (GalNAc...) threonine). Ser185 is modified (phosphoserine).

This sequence belongs to the kappa-casein family. In terms of tissue distribution, mammary gland specific. Secreted in milk.

Its subcellular location is the secreted. In terms of biological role, kappa-casein stabilizes micelle formation, preventing casein precipitation in milk. In Sus scrofa (Pig), this protein is Kappa-casein (CSN3).